The following is a 348-amino-acid chain: uncharacterized protein (348 aa).

Residues M1–K26 form the signal peptide.

This is an uncharacterized protein from Bacillus subtilis (strain 168).